A 369-amino-acid polypeptide reads, in one-letter code: MLMKTTAVHAPASQGTSGIVLDSLRVAYHGNVVLKPLSLTIEPGEVLALIGPSGSGKTTVLRAVAGFVQPAGGRILIGDTDVTHLPPYKRGLAMVVQNYALFPHLKVEDNVAFGLRAQKQPKALINERVTQALKTVGMSDYAARYPHQLSGGQQQRVAIARAIAVRPRVLLLDEPLSALDAQIRHNMVEELARLHRELPELTILYVTHDQTEALTLADKIGIMKDGSLIAHGETRALYQHPPNRFASEFLGRANILSAIALGITEAPGLVHVSCGGAVIRAFSRGSHHGYNKLLCIRPQHLSLTPRSAYSNRFNATLQSVHWQGDLTHLLCDVAGETVRMVLTHVNPLPRVGDKLALWFEPDDAVLIEV.

Residues 19–250 (IVLDSLRVAY…PPNRFASEFL (232 aa)) enclose the ABC transporter domain. 51 to 58 (GPSGSGKT) serves as a coordination point for ATP.

This sequence belongs to the ABC transporter superfamily. 2-aminoethylphosphonate importer (TC 3.A.1.11.5) family.

It localises to the cell inner membrane. Functionally, probably part of the PhnSTUV complex (TC 3.A.1.11.5) involved in 2-aminoethylphosphonate import. Probably responsible for energy coupling to the transport system. The sequence is that of Putative 2-aminoethylphosphonate import ATP-binding protein PhnT (phnT) from Salmonella choleraesuis (strain SC-B67).